The following is a 390-amino-acid chain: Succinyl-diaminopimelate desuccinylase (390 aa).

His-74 contributes to the Zn(2+) binding site. Residue Asp-76 is part of the active site. Position 107 (Asp-107) interacts with Zn(2+). Glu-140 acts as the Proton acceptor in catalysis. 3 residues coordinate Zn(2+): Glu-141, Glu-169, and His-363.

The protein belongs to the peptidase M20A family. DapE subfamily. Homodimer. Zn(2+) serves as cofactor. It depends on Co(2+) as a cofactor.

The catalysed reaction is N-succinyl-(2S,6S)-2,6-diaminopimelate + H2O = (2S,6S)-2,6-diaminopimelate + succinate. It participates in amino-acid biosynthesis; L-lysine biosynthesis via DAP pathway; LL-2,6-diaminopimelate from (S)-tetrahydrodipicolinate (succinylase route): step 3/3. In terms of biological role, catalyzes the hydrolysis of N-succinyl-L,L-diaminopimelic acid (SDAP), forming succinate and LL-2,6-diaminopimelate (DAP), an intermediate involved in the bacterial biosynthesis of lysine and meso-diaminopimelic acid, an essential component of bacterial cell walls. In Bartonella bacilliformis (strain ATCC 35685 / KC583 / Herrer 020/F12,63), this protein is Succinyl-diaminopimelate desuccinylase.